Consider the following 938-residue polypeptide: Glutamate receptor ionotropic, NMDA 1 (938 aa).

A signal peptide spans 1–18; sequence MSTMHLLTFALLFSCSFA. Over 19-559 the chain is Extracellular; the sequence is RAACDPKIVN…TLDSFMQPFQ (541 aa). N-linked (GlcNAc...) asparagine glycans are attached at residues asparagine 61, asparagine 203, asparagine 239, asparagine 276, asparagine 300, asparagine 350, asparagine 368, asparagine 440, asparagine 471, and asparagine 491. The cysteines at positions 79 and 308 are disulfide-linked. 2 disulfide bridges follow: cysteine 420–cysteine 454 and cysteine 436–cysteine 455. The glycine site is built by proline 516, threonine 518, and arginine 523. A helical transmembrane segment spans residues 560–580; sequence STLWLLVGLSVHVVAVMLYLL. Residues 581–602 lie on the Cytoplasmic side of the membrane; it reads DRFSPFGRFKVNSEEEEEDALT. The segment at residues 603-624 is an intramembrane region (discontinuously helical); it reads LSSAMWFSWGVLLNSGIGEGAP. Positions 603–624 are pore-forming; the sequence is LSSAMWFSWGVLLNSGIGEGAP. The Cytoplasmic portion of the chain corresponds to 625-630; the sequence is RSFSAR. Residues 631 to 647 form a helical membrane-spanning segment; sequence ILGMVWAGFAMIIVASY. The Extracellular portion of the chain corresponds to 648 to 812; it reads TANLAAFLVL…NAPATLTFEN (165 aa). N-linked (GlcNAc...) asparagine glycosylation is present at asparagine 674. Glycine is bound by residues serine 688 and aspartate 732. Cysteine 744 and cysteine 798 are joined by a disulfide. The N-linked (GlcNAc...) asparagine glycan is linked to asparagine 771. A helical membrane pass occupies residues 813 to 833; the sequence is MAGVFMLVAGGIVAGIFLIFI. The Cytoplasmic segment spans residues 834 to 938; that stretch reads EIAYKRHKDA…LQLCSRHRES (105 aa). Residue lysine 877 is modified to Phosphoserine. Residues serine 889, serine 890, serine 896, and serine 897 each carry the phosphoserine; by PKC modification. The tract at residues 889-938 is disordered; sequence SSFKRRRSSKDTSTGGGRGALQNQKDTVLPRRAIEREEGQLQLCSRHRES. Lysine 898 is subject to Phosphoserine. The segment covering 916-927 has biased composition (basic and acidic residues); the sequence is VLPRRAIEREEG.

Belongs to the glutamate-gated ion channel (TC 1.A.10.1) family. NR1/GRIN1 subfamily. As to quaternary structure, heterotetramer; the NMDAR subunits are modular and harbor tiered domains that function in concert to regulate opening and closing of the cation-selective ion channel pore. Forms heterotetrameric channels composed of two GluN1/zeta subunits (GRIN1), and two identical GluN2/epsilon subunits (GRIN2A, GRIN2B, GRIN2C or GRIN2D) or GluN3 subunits (GRIN3A or GRIN3B) (in vitro). Can also form heterotetrameric channels that contain at least two GluN1 subunits and at least two different GluN2 subunits (or a combination of one GluN2 and one GluN3 subunits) (in vitro). In vivo, the subunit composition may vary in function of the expression levels of the different subunits. Found in a complex with GRIN2A or GRIN2B, GRIN3A and PPP2CB. Found in a complex with GRIN2A or GRIN2B and GRIN3B;. Interacts with SNX27 (via PDZ domain); the interaction is required for recycling to the plasma membrane when endocytosed and prevent degradation in lysosomes. Interacts with DLG4 and MPDZ. Interacts with LRFN1 and LRFN2. Interacts with MYZAP. Found in a complex with DLG4 and PRR7. Found in a complex with GRIN2B and PRR7. Interacts with PRR7; the interaction is reduced following NMDA receptor activity. Post-translationally, NMDA is probably regulated by C-terminal phosphorylation of an isoform of NR1 by PKC. Dephosphorylated on Ser-897 probably by protein phosphatase 2A (PPP2CB). Its phosphorylated state is influenced by the formation of the NMDAR-PPP2CB complex and the NMDAR channel activity. As to expression, detected throughout the brain, in brain cortex, cerebellum, thalamus and olfactory bulb.

The protein localises to the cell membrane. The protein resides in the postsynaptic cell membrane. It is found in the synaptic cell membrane. Its subcellular location is the postsynaptic density membrane. It carries out the reaction Ca(2+)(in) = Ca(2+)(out). The enzyme catalyses Na(+)(in) = Na(+)(out). The catalysed reaction is K(+)(in) = K(+)(out). With respect to regulation, NMDA glutamate receptor activity is potentiated by Zn2(+) in a dose-dependent fashion. The potentiating effect of Zn2(+) is at submicromolar concentrations and its inhibitory action is at high micromolar to millimolar concentrations. Excitatory glycine receptors are inhibited by D-serine at 100uM. Its function is as follows. Component of N-methyl-D-aspartate (NMDA) receptors (NMDARs) that function as heterotetrameric, ligand-gated cation channels with high calcium permeability and voltage-dependent block by Mg(2+). NMDARs participate in synaptic plasticity for learning and memory formation by contributing to the long-term potentiation (LTP). Channel activation requires binding of the neurotransmitter L-glutamate to the GluN2 subunit, glycine or D-serine binding to the GluN1 subunit, plus membrane depolarization to eliminate channel inhibition by Mg(2+). NMDARs mediate simultaneously the potasium efflux and the influx of calcium and sodium. Each GluN2 or GluN3 subunit confers differential attributes to channel properties, including activation, deactivation and desensitization kinetics, pH sensitivity, Ca2(+) permeability, and binding to allosteric modulators. Forms excitatory glycinergic receptor complexes with GluN3 alone which are activated by glycine binding to the GluN1 and GluN3 subunits. This chain is Glutamate receptor ionotropic, NMDA 1, found in Rattus norvegicus (Rat).